The primary structure comprises 107 residues: Probable antitoxin TacA (107 aa).

It belongs to the TacA antitoxin family. In terms of assembly, forms a complex with cognate antitoxin TacT.

Functionally, probable antitoxin component of a type II toxin-antitoxin (TA) system. Should neutralize cognate toxin TacT (y4aS). This chain is Probable antitoxin TacA, found in Sinorhizobium fredii (strain NBRC 101917 / NGR234).